Here is a 424-residue protein sequence, read N- to C-terminus: Histidine--tRNA ligase (424 aa).

The protein belongs to the class-II aminoacyl-tRNA synthetase family. As to quaternary structure, homodimer.

The protein resides in the cytoplasm. It catalyses the reaction tRNA(His) + L-histidine + ATP = L-histidyl-tRNA(His) + AMP + diphosphate + H(+). In Salmonella dublin (strain CT_02021853), this protein is Histidine--tRNA ligase.